The chain runs to 653 residues: Chaperone protein dnaK3 (653 aa).

Thr-197 is subject to Phosphothreonine; by autocatalysis.

The protein belongs to the heat shock protein 70 family.

Acts as a chaperone. This is Chaperone protein dnaK3 (dnaK3) from Nostoc sp. (strain PCC 7120 / SAG 25.82 / UTEX 2576).